A 173-amino-acid polypeptide reads, in one-letter code: HTH-type transcriptional regulator IscR (173 aa).

In terms of domain architecture, HTH rrf2-type spans 2-131 (RLTSKGRYAV…NNITLGELMM (130 aa)). The segment at residues 28–51 (LADISERQGISLSYLEQLFSKLRK) is a DNA-binding region (H-T-H motif). The [2Fe-2S] cluster site is built by cysteine 92, cysteine 98, and cysteine 104.

The cofactor is [2Fe-2S] cluster.

Its function is as follows. Regulates the transcription of several operons and genes involved in the biogenesis of Fe-S clusters and Fe-S-containing proteins. The chain is HTH-type transcriptional regulator IscR from Vibrio cholerae serotype O1 (strain ATCC 39315 / El Tor Inaba N16961).